We begin with the raw amino-acid sequence, 182 residues long: MASSMISSATVATVSRATPAQATMVAPFTGLKSTAAFPATRKSNNDITSLASNGGRVQCMKVWPPLGLQKFETLSYLPPLSIESLAKQIEYLILKGWIPCLEFELEHPFVYRENNRSPGYYDGRYWVMWKLPMFGCTDATQVLAELQEASKTYPTSHIRIIGFDNKRQVQCISFIAYKPPAK.

A chloroplast-targeting transit peptide spans 1–58 (MASSMISSATVATVSRATPAQATMVAPFTGLKSTAAFPATRKSNNDITSLASNGGRVQ).

This sequence belongs to the RuBisCO small chain family. Heterohexadecamer of 8 large and 8 small subunits.

It is found in the plastid. It localises to the chloroplast. RuBisCO catalyzes two reactions: the carboxylation of D-ribulose 1,5-bisphosphate, the primary event in carbon dioxide fixation, as well as the oxidative fragmentation of the pentose substrate. Both reactions occur simultaneously and in competition at the same active site. Although the small subunit is not catalytic it is essential for maximal activity. The protein is Ribulose bisphosphate carboxylase small subunit, chloroplastic of Fagus crenata (Japanese beech).